Consider the following 567-residue polypeptide: Membrane protein insertase YidC (567 aa).

The chain crosses the membrane as a helical span at residues 3–23 (IQRIVLFAGLAIVSYLMVLAW). The interval 32 to 80 (TEQVAEAQSSSDSSATNSTDDMILPEDNNAGGEEFATPETGSLASTSAN) is disordered. Residues 40–52 (SSSDSSATNSTDD) show a composition bias toward low complexity. Residues 70-80 (ETGSLASTSAN) are compositionally biased toward polar residues. The next 5 helical transmembrane spans lie at 354-374 (FGWL…FYGL), 378-398 (WGVA…HLSA), 445-465 (GGCL…WVLF), 485-505 (MDPY…QMSL), and 522-542 (PLIF…YWLV).

It belongs to the OXA1/ALB3/YidC family. Type 1 subfamily. As to quaternary structure, interacts with the Sec translocase complex via SecD. Specifically interacts with transmembrane segments of nascent integral membrane proteins during membrane integration.

The protein localises to the cell inner membrane. Required for the insertion and/or proper folding and/or complex formation of integral membrane proteins into the membrane. Involved in integration of membrane proteins that insert both dependently and independently of the Sec translocase complex, as well as at least some lipoproteins. Aids folding of multispanning membrane proteins. The protein is Membrane protein insertase YidC of Marinobacter nauticus (strain ATCC 700491 / DSM 11845 / VT8) (Marinobacter aquaeolei).